Reading from the N-terminus, the 398-residue chain is Ras-related GTP-binding protein C (398 aa).

Positions 1-56 (MSLQYGAEETPLAGSYGAADSFPKDFGYGVEEEEEEAAAGGGGGAGAGGGCGPGGA) are disordered. An N-acetylserine modification is found at Ser-2. Phosphoserine is present on residues Ser-2 and Ser-15. The segment covering 39–55 (AGGGGGAGAGGGCGPGG) has biased composition (gly residues). Positions 70, 71, 72, 73, 74, and 75 each coordinate GDP. Position 73 (Lys-73) interacts with GTP. Residues Thr-89 and Thr-95 each contribute to the GTP site. Thr-95 carries the phosphothreonine modification. His-177, Lys-178, Asp-180, and Ile-219 together coordinate GDP. Position 180 (Asp-180) interacts with GTP.

This sequence belongs to the GTR/RAG GTP-binding protein family. As to quaternary structure, forms a heterodimer with RRAGA, in a sequence-independent manner, and RRAGB. Heterodimerization stabilizes proteins of the heterodimer. The GDP-bound form of RRAGC (in complex with the GTP-bound form of RRAGA or RRAGB), interacts with RPTOR, thereby promoting recruitment of mTORC1 to the lysosomes. Component of the lysosomal folliculin complex (LFC), composed of FLCN, FNIP1 (or FNIP2), RagA/RRAGA or RagB/RRAGB GDP-bound, RagC/RRAGC or RagD/RRAGD GTP-bound, and Ragulator. Interacts with NOL8. Interacts with SH3BP4; the interaction with this negative regulator is most probably direct, preferentially occurs with the inactive GDP-bound form of RRAGB, is negatively regulated by amino acids and prevents interaction with RPTOR. The Rag heterodimer interacts with SLC38A9; the probable amino acid sensor. Interacts with SESN1, SESN2 and SESN3. Interacts with PIP4P1. The GDP-bound form interacts with TFEB. The GDP-bound form interacts with TFE3. As to expression, expressed most abundantly in kidney. Moderately expressed in brain, ovary, and testis, and detected at lower levels in heart, liver, and muscle. Not detected in lung, spleen, and small intestine. Widely expressed in tumor cells, with expression being specifically up-regulated in highly metastatic cells.

It is found in the cytoplasm. It localises to the nucleus. The protein localises to the lysosome membrane. The enzyme catalyses GTP + H2O = GDP + phosphate + H(+). With respect to regulation, the activation of RagC/RRAGC is mediated by a GTPase activating protein (GAP). In high-amino acid conditions, activated by GTPase activating protein FLCN that stimulates RRAGC GTPase activity to turn it into its active GDP-bound form. In response to amino acid depletion, the GATOR1 complex inactivates RagC/RRAGC by securing the GTP-bound inactive form. In terms of biological role, guanine nucleotide-binding protein that plays a crucial role in the cellular response to amino acid availability through regulation of the mTORC1 signaling cascade. Forms heterodimeric Rag complexes with RagA/RRAGA or RagB/RRAGB and cycles between an inactive GTP-bound and an active GDP-bound form: RagC/RRAGC is in its active form when GDP-bound RagC/RRAGC forms a complex with GTP-bound RagA/RRAGA (or RagB/RRAGB) and in an inactive form when GTP-bound RagC/RRAGC heterodimerizes with GDP-bound RagA/RRAGA (or RagB/RRAGB). In its GDP-bound active form, promotes the recruitment of mTORC1 to the lysosomes and its subsequent activation by the GTPase RHEB. This is a crucial step in the activation of the MTOR signaling cascade by amino acids. Also plays a central role in the non-canonical mTORC1 complex, which acts independently of RHEB and specifically mediates phosphorylation of MiT/TFE factors TFEB and TFE3: GDP-bound RagC/RRAGC mediates recruitment of MiT/TFE factors TFEB and TFE3. The protein is Ras-related GTP-binding protein C of Mus musculus (Mouse).